The chain runs to 142 residues: Ribonuclease VapC25 (142 aa).

The 137-residue stretch at 3–139 folds into the PINc domain; that stretch reads LIDVNVLLAA…ARFASVRHIR (137 aa). Residues aspartate 5 and aspartate 108 each contribute to the Mg(2+) site.

Belongs to the PINc/VapC protein family. Requires Mg(2+) as cofactor.

Toxic component of a type II toxin-antitoxin (TA) system. An RNase. Upon expression in M.smegmatis inhibits colony formation. Its toxic effect is neutralized by coexpression with cognate antitoxin VapB25. This Mycobacterium tuberculosis (strain ATCC 25618 / H37Rv) protein is Ribonuclease VapC25.